The chain runs to 374 residues: Glutamate 5-kinase (374 aa).

Residue Lys13 participates in ATP binding. Residues Ser54, Asp141, and Asn153 each contribute to the substrate site. 173–174 (SD) is a binding site for ATP. The PUA domain occupies 278 to 355 (KGTVHLDSGA…NEIESVLGYP (78 aa)).

This sequence belongs to the glutamate 5-kinase family.

It is found in the cytoplasm. It catalyses the reaction L-glutamate + ATP = L-glutamyl 5-phosphate + ADP. It functions in the pathway amino-acid biosynthesis; L-proline biosynthesis; L-glutamate 5-semialdehyde from L-glutamate: step 1/2. Its function is as follows. Catalyzes the transfer of a phosphate group to glutamate to form L-glutamate 5-phosphate. The polypeptide is Glutamate 5-kinase (Roseobacter denitrificans (strain ATCC 33942 / OCh 114) (Erythrobacter sp. (strain OCh 114))).